The primary structure comprises 556 residues: Delta-1-pyrroline-5-carboxylate dehydrogenase 12A1, mitochondrial (556 aa).

Residue 282-287 participates in NAD(+) binding; it reads GSSRVA. The active-site Proton acceptor is the Glu-301. Residue Cys-336 is the Nucleophile of the active site.

This sequence belongs to the aldehyde dehydrogenase family. As to expression, highly expressed in flowers. Constitutively expressed at low levels in the other tissues. Highly expressed in pollen grains and tissues undergoing cell death. Expressed in old leaves, mature siliques and developing embryos.

It is found in the mitochondrion matrix. The catalysed reaction is (S)-1-pyrroline-5-carboxylate + NAD(+) + 2 H2O = L-glutamate + NADH + H(+). The protein operates within amino-acid degradation; L-proline degradation into L-glutamate; L-glutamate from L-proline: step 2/2. Its function is as follows. Plays a role in the inhibition of programmed cell death by converting the toxic proline catabolism intermediate (s)-1-pyrroline-5-carboxylate (P5C) to glutamate. This is Delta-1-pyrroline-5-carboxylate dehydrogenase 12A1, mitochondrial from Arabidopsis thaliana (Mouse-ear cress).